A 201-amino-acid polypeptide reads, in one-letter code: Dephospho-CoA kinase (201 aa).

Residues 4-201 enclose the DPCK domain; that stretch reads SVGLTGNIAS…KYLREAKIKQ (198 aa). An ATP-binding site is contributed by 12 to 17; it reads ASGKST.

It belongs to the CoaE family.

It localises to the cytoplasm. The enzyme catalyses 3'-dephospho-CoA + ATP = ADP + CoA + H(+). It participates in cofactor biosynthesis; coenzyme A biosynthesis; CoA from (R)-pantothenate: step 5/5. Catalyzes the phosphorylation of the 3'-hydroxyl group of dephosphocoenzyme A to form coenzyme A. This is Dephospho-CoA kinase from Legionella pneumophila (strain Lens).